Reading from the N-terminus, the 552-residue chain is Gamma-aminobutyric acid receptor subunit alpha-4 (552 aa).

The N-terminal stretch at 1 to 35 (MVSVQKVPAIALCSGVSLALLHFLCLAACLNESPG) is a signal peptide. Over 36–259 (QNSKDEKLCP…FHLRRKMGYF (224 aa)) the chain is Extracellular. Residue Asn-47 is glycosylated (N-linked (GlcNAc...) asparagine). Arg-100 provides a ligand contact to 4-aminobutanoate. Residues Asn-144 and Asn-157 are each glycosylated (N-linked (GlcNAc...) asparagine). Thr-163 serves as a coordination point for 4-aminobutanoate. Cys-172 and Cys-186 are oxidised to a cystine. The helical transmembrane segment at 260 to 280 (MIQTYIPCIMTVILSQVSFWI) threads the bilayer. Residues 281–284 (NKES) lie on the Cytoplasmic side of the membrane. A helical membrane pass occupies residues 285-305 (VPARTVFGITTVLTMTTLSIS). The Extracellular segment spans residues 306–318 (ARHSLPKVSYATA). The chain crosses the membrane as a helical span at residues 319–341 (MDWFIAVCFAFVFSALIEFAAVN). The Cytoplasmic portion of the chain corresponds to 342–515 (YFTNIQMQKA…PPPSGSGTSK (174 aa)). Disordered stretches follow at residues 353 to 480 (KKIS…FGSR) and 492 to 513 (GAAGNVSATPPPPAPPPSGSGT). Positions 396–406 (SESDVKSRTEV) are enriched in basic and acidic residues. Positions 407–422 (GNHSSKTSAVQESSEA) are enriched in polar residues. The segment covering 445-458 (SAAARGLSSAASPS) has biased composition (low complexity). A compositionally biased stretch (pro residues) spans 500–509 (TPPPPAPPPS). Residues 516–538 (IDKYARILFPVTFGAFNMVYWVV) form a helical membrane-spanning segment. The Extracellular segment spans residues 539 to 552 (YLSKDTMEKSESLM).

Belongs to the ligand-gated ion channel (TC 1.A.9) family. Gamma-aminobutyric acid receptor (TC 1.A.9.5) subfamily. GABRA4 sub-subfamily. As to quaternary structure, heteropentamer, formed by a combination of alpha (GABRA1-6), beta (GABRB1-3), gamma (GABRG1-3), delta (GABRD), epsilon (GABRE), rho (GABRR1-3), pi (GABRP) and theta (GABRQ) chains, each subunit exhibiting distinct physiological and pharmacological properties. Expressed in the brain.

It is found in the cell membrane. The protein resides in the postsynaptic cell membrane. The enzyme catalyses chloride(in) = chloride(out). With respect to regulation, potentiated by gaboxadol. Potentiated by histamine. Functionally, alpha subunit of the heteropentameric ligand-gated chloride channel gated by gamma-aminobutyric acid (GABA), a major inhibitory neurotransmitter in the brain. GABA-gated chloride channels, also named GABA(A) receptors (GABAAR), consist of five subunits arranged around a central pore and contain GABA active binding site(s) located at the alpha and beta subunit interface(s). Alpha-4/GABRA4 subunit often assembles with delta or gamma-2 subunits, in combination with beta subunits. When activated by GABA, GABAARs selectively allow the flow of chloride anions across the cell membrane down their electrochemical gradient. GABAARs containing alpha-4 are predominantly extrasynaptic, contributing to tonic inhibition in dentate granule cells and thalamic relay neurons. Extrasynaptic alpha-4-containing GABAARs control levels of excitability and network activity. GABAAR containing alpha-4-beta-3-delta subunits can simultaneously bind GABA and histamine where histamine binds at the interface of two neighboring beta subunits, which may be involved in the regulation of sleep and wakefulness. This chain is Gamma-aminobutyric acid receptor subunit alpha-4, found in Mus musculus (Mouse).